The following is a 386-amino-acid chain: Chaperone protein DnaJ (386 aa).

Residues 3 to 68 (DYYEILEVAR…KKRQVYDRYG (66 aa)) enclose the J domain. Residues 146–224 (GVDKELVISN…CKGQGAVKEK (79 aa)) form a CR-type zinc finger. Positions 159, 162, 176, 179, 198, 201, 212, and 215 each coordinate Zn(2+). CXXCXGXG motif repeat units lie at residues 159–166 (CNVCNGKG), 176–183 (CSECKGRG), 198–205 (CPKCHGEG), and 212–219 (CKNCKGQG).

The protein belongs to the DnaJ family. As to quaternary structure, homodimer. Requires Zn(2+) as cofactor.

It is found in the cytoplasm. Functionally, participates actively in the response to hyperosmotic and heat shock by preventing the aggregation of stress-denatured proteins and by disaggregating proteins, also in an autonomous, DnaK-independent fashion. Unfolded proteins bind initially to DnaJ; upon interaction with the DnaJ-bound protein, DnaK hydrolyzes its bound ATP, resulting in the formation of a stable complex. GrpE releases ADP from DnaK; ATP binding to DnaK triggers the release of the substrate protein, thus completing the reaction cycle. Several rounds of ATP-dependent interactions between DnaJ, DnaK and GrpE are required for fully efficient folding. Also involved, together with DnaK and GrpE, in the DNA replication of plasmids through activation of initiation proteins. The protein is Chaperone protein DnaJ of Protochlamydia amoebophila (strain UWE25).